Consider the following 398-residue polypeptide: Na(+)/H(+) antiporter NhaA (398 aa).

12 helical membrane passes run 8–28, 59–79, 96–116, 124–144, 154–174, 177–197, 202–222, 223–243, 261–281, 292–312, 328–348, and 362–382; these read FLQL…LALI, LLLW…GMEI, LPVI…SFII, AGWA…LSLL, VFLL…IALF, AELH…LLML, VMLL…VLKS, GVHA…IRGA, YFIL…GLSW, IIVG…WLAV, LFGL…IGGL, and LGIL…LRNA.

The protein belongs to the NhaA Na(+)/H(+) (TC 2.A.33) antiporter family.

It localises to the cell inner membrane. It carries out the reaction Na(+)(in) + 2 H(+)(out) = Na(+)(out) + 2 H(+)(in). Its function is as follows. Na(+)/H(+) antiporter that extrudes sodium in exchange for external protons. The sequence is that of Na(+)/H(+) antiporter NhaA from Tolumonas auensis (strain DSM 9187 / NBRC 110442 / TA 4).